The following is a 206-amino-acid chain: Thymidylate kinase (206 aa).

11-18 (GIDGAGKT) serves as a coordination point for ATP.

Belongs to the thymidylate kinase family.

It carries out the reaction dTMP + ATP = dTDP + ADP. Functionally, phosphorylation of dTMP to form dTDP in both de novo and salvage pathways of dTTP synthesis. This chain is Thymidylate kinase, found in Burkholderia cenocepacia (strain ATCC BAA-245 / DSM 16553 / LMG 16656 / NCTC 13227 / J2315 / CF5610) (Burkholderia cepacia (strain J2315)).